The following is a 279-amino-acid chain: 2-dehydro-3-deoxyphosphooctonate aldolase (279 aa).

This sequence belongs to the KdsA family.

The protein resides in the cytoplasm. It catalyses the reaction D-arabinose 5-phosphate + phosphoenolpyruvate + H2O = 3-deoxy-alpha-D-manno-2-octulosonate-8-phosphate + phosphate. The protein operates within carbohydrate biosynthesis; 3-deoxy-D-manno-octulosonate biosynthesis; 3-deoxy-D-manno-octulosonate from D-ribulose 5-phosphate: step 2/3. It functions in the pathway bacterial outer membrane biogenesis; lipopolysaccharide biosynthesis. This is 2-dehydro-3-deoxyphosphooctonate aldolase from Methylobacillus flagellatus (strain ATCC 51484 / DSM 6875 / VKM B-1610 / KT).